The primary structure comprises 428 residues: tRNA modification GTPase MnmE (428 aa).

(6S)-5-formyl-5,6,7,8-tetrahydrofolate is bound by residues R20, E76, and R116. Residues 212 to 351 (GFEVAIIGAP…LVEALQDRLL (140 aa)) enclose the TrmE-type G domain. Residue N222 participates in K(+) binding. Residues 222-227 (NAGKST), 241-247 (SEVAGTT), and 266-269 (DTAG) each bind GTP. S226 provides a ligand contact to Mg(2+). K(+) is bound by residues S241, V243, and T246. T247 is a binding site for Mg(2+). (6S)-5-formyl-5,6,7,8-tetrahydrofolate is bound at residue K428.

Belongs to the TRAFAC class TrmE-Era-EngA-EngB-Septin-like GTPase superfamily. TrmE GTPase family. In terms of assembly, homodimer. Heterotetramer of two MnmE and two MnmG subunits. The cofactor is K(+).

The protein localises to the cytoplasm. Functionally, exhibits a very high intrinsic GTPase hydrolysis rate. Involved in the addition of a carboxymethylaminomethyl (cmnm) group at the wobble position (U34) of certain tRNAs, forming tRNA-cmnm(5)s(2)U34. The polypeptide is tRNA modification GTPase MnmE (Cereibacter sphaeroides (strain ATCC 17025 / ATH 2.4.3) (Rhodobacter sphaeroides)).